Reading from the N-terminus, the 534-residue chain is ATP-dependent rRNA helicase RRP3 (534 aa).

Residues Lys-67–Thr-107 form a disordered region. Low complexity-rich tracts occupy residues Gln-68–Gln-80 and Thr-91–Thr-107. The Q motif signature appears at Lys-118–Ser-146. In terms of domain architecture, Helicase ATP-binding spans Ile-149 to Val-320. Ala-162–Thr-169 contributes to the ATP binding site. The short motif at Asp-268 to Asp-271 is the DEAD box element. Residues Ile-347–Asp-492 enclose the Helicase C-terminal domain. 2 stretches are compositionally biased toward basic and acidic residues: residues Ala-505–Asn-517 and Asn-525–Arg-534. A disordered region spans residues Ala-505–Arg-534.

Belongs to the DEAD box helicase family. DDX47/RRP3 subfamily. Interacts with the SSU processome.

The protein resides in the nucleus. The catalysed reaction is ATP + H2O = ADP + phosphate + H(+). Its function is as follows. ATP-dependent rRNA helicase required for pre-ribosomal RNA processing. Involved in the maturation of the 35S-pre-rRNA and to its cleavage to mature 18S rRNA. The sequence is that of ATP-dependent rRNA helicase RRP3 from Candida albicans (strain SC5314 / ATCC MYA-2876) (Yeast).